The chain runs to 517 residues: Apolipoprotein N-acyltransferase (517 aa).

The next 7 membrane-spanning stretches (helical) occupy residues 5 to 25 (SFFS…ATLT), 26 to 46 (FAPY…LWLL), 55 to 75 (GLIG…WVHV), 90 to 110 (FLMS…GALF), 128 to 148 (VIWL…PWLW), 162 to 182 (APIL…GALV), and 193 to 213 (LMVP…SWVV). Residues 225 to 471 (IQGNVPQELK…TAVLRATITP (247 aa)) enclose the CN hydrolase domain. Glu264 functions as the Proton acceptor in the catalytic mechanism. Lys330 is an active-site residue. Catalysis depends on Cys382, which acts as the Nucleophile.

The protein belongs to the CN hydrolase family. Apolipoprotein N-acyltransferase subfamily.

Its subcellular location is the cell inner membrane. It carries out the reaction N-terminal S-1,2-diacyl-sn-glyceryl-L-cysteinyl-[lipoprotein] + a glycerophospholipid = N-acyl-S-1,2-diacyl-sn-glyceryl-L-cysteinyl-[lipoprotein] + a 2-acyl-sn-glycero-3-phospholipid + H(+). It functions in the pathway protein modification; lipoprotein biosynthesis (N-acyl transfer). Its function is as follows. Catalyzes the phospholipid dependent N-acylation of the N-terminal cysteine of apolipoprotein, the last step in lipoprotein maturation. This chain is Apolipoprotein N-acyltransferase, found in Photobacterium profundum (strain SS9).